The following is a 430-amino-acid chain: Adenylosuccinate synthetase (430 aa).

GTP contacts are provided by residues 12–18 (GDEGKGK) and 40–42 (GHT). The active-site Proton acceptor is Asp13. Mg(2+)-binding residues include Asp13 and Gly40. IMP-binding positions include 13-16 (DEGK), 38-41 (NAGH), Thr130, Arg144, Gln224, Thr239, and Arg303. Residue His41 is the Proton donor of the active site. 299–305 (TVTGRKR) is a binding site for substrate. GTP is bound by residues Arg305, 331 to 333 (KLD), and 413 to 415 (STS).

The protein belongs to the adenylosuccinate synthetase family. Homodimer. It depends on Mg(2+) as a cofactor.

Its subcellular location is the cytoplasm. The catalysed reaction is IMP + L-aspartate + GTP = N(6)-(1,2-dicarboxyethyl)-AMP + GDP + phosphate + 2 H(+). It participates in purine metabolism; AMP biosynthesis via de novo pathway; AMP from IMP: step 1/2. Plays an important role in the de novo pathway of purine nucleotide biosynthesis. Catalyzes the first committed step in the biosynthesis of AMP from IMP. The protein is Adenylosuccinate synthetase of Cereibacter sphaeroides (strain ATCC 17025 / ATH 2.4.3) (Rhodobacter sphaeroides).